Here is a 253-residue protein sequence, read N- to C-terminus: Tyrosine recombinase XerD-like (253 aa).

One can recognise a Core-binding (CB) domain in the interval Lys-8–Tyr-81. The region spanning Ser-93–Thr-253 is the Tyr recombinase domain. Residues Lys-157 and Arg-218 contribute to the active site. Tyr-250 (O-(3'-phospho-DNA)-tyrosine intermediate) is an active-site residue.

The protein belongs to the 'phage' integrase family. XerD-like subfamily.

The protein localises to the cytoplasm. In terms of biological role, putative tyrosine recombinase. Not involved in the cutting and rejoining of the recombining DNA molecules on dif(SL) site. The sequence is that of Tyrosine recombinase XerD-like from Streptococcus thermophilus (strain CNRZ 1066).